A 62-amino-acid polypeptide reads, in one-letter code: Potassium channel toxin gamma-KTx 1.1 (62 aa).

The N-terminal stretch at 1–20 (MKVLILIMIIASLMIMGVEM) is a signal peptide. Cystine bridges form between C25–C43, C31–C54, C40–C59, and C44–C61.

Belongs to the ergtoxin family. Gamma-KTx 1 subfamily. In terms of processing, after protein storage at -20 Celsius degrees during a couple of months, the Met-55 of a small number of toxins is naturally oxidized. This oxidized form is about three orders of magnitude less efficient (IC(50)=15 uM) than non-oxidized form. Expressed by the venom gland.

It is found in the secreted. Functionally, blocks human and rat Kv11.1/KCNH2/ERG1 and Kv11.3/KCNH7/ERG3, as well as rat (but not human) Kv11.2/KCNH6/ERG2 by binding to channel outer vestibule (S5P domain) with a 1:1 stoichiometry. Inhibition data are the following: hERG1 (reversible, IC(50)~7 nM), rERG1 (reversible, Kd=6.8 nM), rERG2 (irreversible, Kd=2.8 nM), hERG3 (irreversible, Kd=4.05 nM) and rERG3 (reversible, Kd=38.1 nM) potassium channels. The toxin potency is not affected by elevating potassium ion concentration from 2 to 98 mM. This toxin only blocks channels in a closed state. At high toxin concentrations, block of Kv11.1/KCNH2/ERG1 macroscopic current is incomplete (93.5%). This suggests a kinetic mechanism model with two different states of toxin-channel binding (T+C=TC*=TC; in the TC* state, the toxin binds the channel but does not occlude the pore, whereas in the TC state the toxin binds and occludes the pore). In this model, incomplete block is explained by the relatively fast dissociation rate from the blocked channel conformation (TC) relative to the rate of conversion of the toxin-channel encounter complex (TC*) to the blocked channel conformation (TC). This chain is Potassium channel toxin gamma-KTx 1.1, found in Centruroides noxius (Mexican scorpion).